The chain runs to 143 residues: Sirohydrochlorin cobaltochelatase (143 aa).

H9 serves as the catalytic Proton acceptor. H9 provides a ligand contact to Co(2+). H9 is a binding site for Ni(2+). Substrate is bound by residues E45 and 70-75; that span reads LAHGVH. H75 is a Co(2+) binding site. Residue H75 coordinates Ni(2+).

Belongs to the CbiX family. CbiXS subfamily. In terms of assembly, homotetramer; dimer of dimers.

The enzyme catalyses Co-sirohydrochlorin + 2 H(+) = sirohydrochlorin + Co(2+). The catalysed reaction is Ni-sirohydrochlorin + 2 H(+) = sirohydrochlorin + Ni(2+). Its pathway is cofactor biosynthesis; adenosylcobalamin biosynthesis; cob(II)yrinate a,c-diamide from sirohydrochlorin (anaerobic route): step 1/10. In terms of biological role, catalyzes the insertion of Co(2+) into sirohydrochlorin as part of the anaerobic pathway to cobalamin biosynthesis. Involved in the biosynthesis of the unique nickel-containing tetrapyrrole coenzyme F430, the prosthetic group of methyl-coenzyme M reductase (MCR), which plays a key role in methanogenesis and anaerobic methane oxidation. Catalyzes the insertion of Ni(2+) into sirohydrochlorin to yield Ni-sirohydrochlorin. This Methanopyrus kandleri (strain AV19 / DSM 6324 / JCM 9639 / NBRC 100938) protein is Sirohydrochlorin cobaltochelatase.